The chain runs to 286 residues: Formyltetrahydrofolate deformylase (286 aa).

The region spanning 8–88 (VLTLQCPEGI…MDWQLRERGQ (81 aa)) is the ACT domain. The active site involves aspartate 230.

The protein belongs to the PurU family.

The catalysed reaction is (6R)-10-formyltetrahydrofolate + H2O = (6S)-5,6,7,8-tetrahydrofolate + formate + H(+). The protein operates within purine metabolism; IMP biosynthesis via de novo pathway; formate from 10-formyl-5,6,7,8-tetrahydrofolate: step 1/1. Its function is as follows. Catalyzes the hydrolysis of 10-formyltetrahydrofolate (formyl-FH4) to formate and tetrahydrofolate (FH4). This Corynebacterium sp. (strain P-1) protein is Formyltetrahydrofolate deformylase.